Reading from the N-terminus, the 75-residue chain is DNA-directed RNA polymerase subunit omega (75 aa).

The protein belongs to the RNA polymerase subunit omega family. In terms of assembly, in cyanobacteria the RNAP catalytic core is composed of 2 alpha, 1 beta, 1 beta', 1 gamma and 1 omega subunit. When a sigma factor is associated with the core the holoenzyme is formed, which can initiate transcription.

The enzyme catalyses RNA(n) + a ribonucleoside 5'-triphosphate = RNA(n+1) + diphosphate. In terms of biological role, promotes RNA polymerase assembly. Latches the N- and C-terminal regions of the beta' subunit thereby facilitating its interaction with the beta and alpha subunits. The sequence is that of DNA-directed RNA polymerase subunit omega from Synechococcus sp. (strain WH7803).